A 241-amino-acid polypeptide reads, in one-letter code: Adapter protein MecA (241 aa).

Residues 115-141 (TDSNDKNNDDSSYMSDGNPADLNGYAN) are disordered.

This sequence belongs to the MecA family. In terms of assembly, homodimer.

Its function is as follows. Enables the recognition and targeting of unfolded and aggregated proteins to the ClpC protease or to other proteins involved in proteolysis. This chain is Adapter protein MecA, found in Pediococcus pentosaceus (strain ATCC 25745 / CCUG 21536 / LMG 10740 / 183-1w).